The following is a 591-amino-acid chain: Probable anion transporter 4, chloroplastic (591 aa).

Residues 1–38 (MAMGAVLSSRTFASPLSSSGKQHPPQNNKCTCSSPPTR) form a disordered region. The transit peptide at 1-76 (MAMGAVLSSR…LSARFHQPVV (76 aa)) directs the protein to the chloroplast. The span at 8-36 (SSRTFASPLSSSGKQHPPQNNKCTCSSPP) shows a compositional bias: polar residues. 11 helical membrane passes run 184-204 (VVLL…NMSI), 220-240 (VGLI…LGGI), 249-269 (VVLG…PLAA), 271-291 (IGLP…GVAM), 313-333 (LVYS…PLLI), 336-356 (FGWP…FALW), 402-422 (VWAL…LLTW), 440-460 (LLCV…GWIA), 475-495 (KIMQ…LSKV), 531-551 (AGVL…FGTA), and 565-585 (VFQV…VFST).

This sequence belongs to the major facilitator superfamily. Sodium/anion cotransporter (TC 2.A.1.14) family.

It localises to the plastid. The protein resides in the chloroplast membrane. Probable anion transporter. The chain is Probable anion transporter 4, chloroplastic (PHT4;4) from Oryza sativa subsp. japonica (Rice).